The chain runs to 102 residues: Large ribosomal subunit protein bL21 (102 aa).

The protein belongs to the bacterial ribosomal protein bL21 family. Part of the 50S ribosomal subunit. Contacts protein L20.

Functionally, this protein binds to 23S rRNA in the presence of protein L20. In Campylobacter lari (strain RM2100 / D67 / ATCC BAA-1060), this protein is Large ribosomal subunit protein bL21.